An 82-amino-acid chain; its full sequence is RNA-binding protein TTE2299 (82 aa).

It belongs to the eukaryotic ribosomal protein eL8 family.

In Caldanaerobacter subterraneus subsp. tengcongensis (strain DSM 15242 / JCM 11007 / NBRC 100824 / MB4) (Thermoanaerobacter tengcongensis), this protein is RNA-binding protein TTE2299.